Consider the following 69-residue polypeptide: DNA gyrase inhibitor YacG (69 aa).

The Zn(2+) site is built by C13, C16, C32, and C36.

The protein belongs to the DNA gyrase inhibitor YacG family. As to quaternary structure, interacts with GyrB. The cofactor is Zn(2+).

Inhibits all the catalytic activities of DNA gyrase by preventing its interaction with DNA. Acts by binding directly to the C-terminal domain of GyrB, which probably disrupts DNA binding by the gyrase. This chain is DNA gyrase inhibitor YacG, found in Neisseria meningitidis serogroup B (strain ATCC BAA-335 / MC58).